The following is a 453-amino-acid chain: DDB1- and CUL4-associated factor 12 (453 aa).

The span at Met1–Ala12 shows a compositional bias: basic residues. Residues Met1 to His34 form a disordered region. Positions Met1–Arg38 are required for nuclear location and interaction with MOV10. Ser15 is modified (phosphoserine). WD repeat units follow at residues Glu81–Ile122, Thr123–Pro175, Val176–Asp242, Ile243–Ser286, Lys287–Val331, and Lys332–Asp366.

It belongs to the WD repeat DCAF12 family. Component of the DCX(DCAF12) E3 ubiquitin ligase complex, at least composed of CUL4 (CUL4A or CUL4B), DDB1, DCAF12 and RBX1. In terms of tissue distribution, highly expressed in lung cancer tissues and some cancer cell lines. Restricted expression in normal testis.

Its subcellular location is the cytoplasm. It is found in the cytoskeleton. The protein localises to the microtubule organizing center. The protein resides in the centrosome. It localises to the nucleus. It participates in protein modification; protein ubiquitination. Its function is as follows. Substrate-recognition component of a DCX (DDB1-CUL4-X-box) E3 ubiquitin-protein ligase complex of the DesCEND (destruction via C-end degrons) pathway, which recognizes a C-degron located at the extreme C terminus of target proteins, leading to their ubiquitination and degradation. The C-degron recognized by the DesCEND pathway is usually a motif of less than ten residues and can be present in full-length proteins, truncated proteins or proteolytically cleaved forms. The DCX(DCAF12) complex specifically recognizes proteins with a diglutamate (Glu-Glu) at the C-terminus, such as MAGEA3, MAGEA6 and CCT5, leading to their ubiquitination and degradation. Ubiquitination of MAGEA3, MAGEA6 by DCX(DCAF12) complex is required for starvation-induced autophagy. Also directly recognizes the C-terminal glutamate-leucine (Glu-Leu) degron as an alternative degron in proteins such as MOV10, leading to their ubiquitination and degradation. Controls the protein level of MOV10 during spermatogenesis and in T cells, especially after their activation. This chain is DDB1- and CUL4-associated factor 12, found in Homo sapiens (Human).